The following is a 232-amino-acid chain: Phosphatidylserine decarboxylase proenzyme (232 aa).

Residue serine 201 is the Schiff-base intermediate with substrate; via pyruvic acid of the active site. Serine 201 is modified (pyruvic acid (Ser); by autocatalysis).

Belongs to the phosphatidylserine decarboxylase family. PSD-A subfamily. As to quaternary structure, heterodimer of a large membrane-associated beta subunit and a small pyruvoyl-containing alpha subunit. Pyruvate serves as cofactor. Post-translationally, is synthesized initially as an inactive proenzyme. Formation of the active enzyme involves a self-maturation process in which the active site pyruvoyl group is generated from an internal serine residue via an autocatalytic post-translational modification. Two non-identical subunits are generated from the proenzyme in this reaction, and the pyruvate is formed at the N-terminus of the alpha chain, which is derived from the carboxyl end of the proenzyme. The post-translation cleavage follows an unusual pathway, termed non-hydrolytic serinolysis, in which the side chain hydroxyl group of the serine supplies its oxygen atom to form the C-terminus of the beta chain, while the remainder of the serine residue undergoes an oxidative deamination to produce ammonia and the pyruvoyl prosthetic group on the alpha chain.

Its subcellular location is the cell membrane. The enzyme catalyses a 1,2-diacyl-sn-glycero-3-phospho-L-serine + H(+) = a 1,2-diacyl-sn-glycero-3-phosphoethanolamine + CO2. It functions in the pathway phospholipid metabolism; phosphatidylethanolamine biosynthesis; phosphatidylethanolamine from CDP-diacylglycerol: step 2/2. Functionally, catalyzes the formation of phosphatidylethanolamine (PtdEtn) from phosphatidylserine (PtdSer). The chain is Phosphatidylserine decarboxylase proenzyme from Mycolicibacterium smegmatis (strain ATCC 700084 / mc(2)155) (Mycobacterium smegmatis).